Here is a 471-residue protein sequence, read N- to C-terminus: Heat shock 70 kDa protein 13 (471 aa).

An N-terminal signal peptide occupies residues 1–22 (MAREMTILGSAVLTLLLAGYLA). Residues 314–352 (EEQDRKEPHSSDTELPKDKLSSADDHRVNSGFGRGLSDK) are disordered. Basic and acidic residues predominate over residues 315 to 341 (EQDRKEPHSSDTELPKDKLSSADDHRV).

This sequence belongs to the heat shock protein 70 family. As to quaternary structure, binds UBQLN2.

It localises to the microsome. The protein resides in the endoplasmic reticulum. In terms of biological role, has peptide-independent ATPase activity. This chain is Heat shock 70 kDa protein 13 (HSPA13), found in Pongo abelii (Sumatran orangutan).